We begin with the raw amino-acid sequence, 117 residues long: MSSVLSAYRNALRATKVAFRQDLPILQAARVQLKQGIRDNSNLQAQPEIEEAVQKLNEVAKFLIQNIVQGEKQQDGKYFLNFHEKTELGDNETIKQGRKEMGSLAGKKGSSIKSCND.

The transit peptide at 1–10 directs the protein to the mitochondrion; it reads MSSVLSAYRN. Residues 98 to 117 are disordered; that stretch reads RKEMGSLAGKKGSSIKSCND.

This sequence belongs to the complex I LYR family. MZM1 subfamily. As to quaternary structure, interacts with RIP1.

The protein localises to the mitochondrion matrix. Assembly factor required for Rieske Fe-S protein RIP1 incorporation into the cytochrome b-c1 (CIII) complex. Functions as a chaperone, binding to this subunit within the mitochondrial matrix and stabilizing it prior to its translocation and insertion into the late CIII dimeric intermediate within the mitochondrial inner membrane. Modulates the mitochondrial matrix zinc pool. The chain is Mitochondrial zinc maintenance protein 1, mitochondrial (MZM1) from Candida albicans (strain SC5314 / ATCC MYA-2876) (Yeast).